The primary structure comprises 377 residues: DNA replication and repair protein RecF (377 aa).

30 to 37 (GPNGVGKT) provides a ligand contact to ATP.

This sequence belongs to the RecF family.

It localises to the cytoplasm. Functionally, the RecF protein is involved in DNA metabolism; it is required for DNA replication and normal SOS inducibility. RecF binds preferentially to single-stranded, linear DNA. It also seems to bind ATP. In Salinispora tropica (strain ATCC BAA-916 / DSM 44818 / JCM 13857 / NBRC 105044 / CNB-440), this protein is DNA replication and repair protein RecF.